The chain runs to 478 residues: Cytochrome c-552 (478 aa).

Residues 1-26 (MARKTLRARRFFSLIFPFFFITSVYA) form the signal peptide. H94 is a heme c binding site. The heme site is built by C122, C125, and K126. Residues C160, C163, H164, C209, C212, and H213 each coordinate heme c. Positions 215, 216, 261, and 263 each coordinate Ca(2+). A substrate-binding site is contributed by Y216. H264 lines the substrate pocket. 9 residues coordinate heme c: H275, C282, C285, H286, H301, C314, C317, H318, and H393.

It belongs to the cytochrome c-552 family. It depends on Ca(2+) as a cofactor. Heme c serves as cofactor.

The protein resides in the periplasm. It carries out the reaction 6 Fe(III)-[cytochrome c] + NH4(+) + 2 H2O = 6 Fe(II)-[cytochrome c] + nitrite + 8 H(+). It functions in the pathway nitrogen metabolism; nitrate reduction (assimilation). Functionally, catalyzes the reduction of nitrite to ammonia, consuming six electrons in the process. The chain is Cytochrome c-552 from Salmonella gallinarum (strain 287/91 / NCTC 13346).